Consider the following 221-residue polypeptide: Phosphoribosylformylglycinamidine synthase subunit PurQ (221 aa).

The Glutamine amidotransferase type-1 domain occupies 5–221 (TVGIVVFPGS…LYTLRSLITQ (217 aa)). The active-site Nucleophile is cysteine 89. Residues histidine 197 and glutamate 199 contribute to the active site.

Part of the FGAM synthase complex composed of 1 PurL, 1 PurQ and 2 PurS subunits.

Its subcellular location is the cytoplasm. It carries out the reaction N(2)-formyl-N(1)-(5-phospho-beta-D-ribosyl)glycinamide + L-glutamine + ATP + H2O = 2-formamido-N(1)-(5-O-phospho-beta-D-ribosyl)acetamidine + L-glutamate + ADP + phosphate + H(+). The catalysed reaction is L-glutamine + H2O = L-glutamate + NH4(+). It participates in purine metabolism; IMP biosynthesis via de novo pathway; 5-amino-1-(5-phospho-D-ribosyl)imidazole from N(2)-formyl-N(1)-(5-phospho-D-ribosyl)glycinamide: step 1/2. Its function is as follows. Part of the phosphoribosylformylglycinamidine synthase complex involved in the purines biosynthetic pathway. Catalyzes the ATP-dependent conversion of formylglycinamide ribonucleotide (FGAR) and glutamine to yield formylglycinamidine ribonucleotide (FGAM) and glutamate. The FGAM synthase complex is composed of three subunits. PurQ produces an ammonia molecule by converting glutamine to glutamate. PurL transfers the ammonia molecule to FGAR to form FGAM in an ATP-dependent manner. PurS interacts with PurQ and PurL and is thought to assist in the transfer of the ammonia molecule from PurQ to PurL. In Prochlorococcus marinus subsp. pastoris (strain CCMP1986 / NIES-2087 / MED4), this protein is Phosphoribosylformylglycinamidine synthase subunit PurQ.